The sequence spans 671 residues: ABC transporter ATP-binding protein/permease wht-1 (671 aa).

The Cytoplasmic portion of the chain corresponds to 1-408 (MHKAPISTLI…SWLTVIRDPN (408 aa)). Residues 64–310 (TNFVDRFRNN…FEKCGYPCPA (247 aa)) form the ABC transporter domain. Position 100 to 107 (100 to 107 (GSSGAGKT)) interacts with ATP. The helical transmembrane segment at 409 to 429 (LLSVRLLQILITAFITGIVFF) threads the bilayer. Topologically, residues 430 to 451 (QTPVTPATIISINGIMFNHIRN) are extracellular. A helical transmembrane segment spans residues 452–472 (MNFMLQFPNVPVITAELPIVL). The Cytoplasmic segment spans residues 473–497 (RENANGVYRTSAYFLAKNIAELPQY). The chain crosses the membrane as a helical span at residues 498-518 (IILPILYNTIVYWMSGLYPNF). At 519–525 (WNYCFAS) the chain is on the extracellular side. Residues 526–546 (LVTILITNVAISISYAVATIF) traverse the membrane as a helical segment. Over 547–550 (ANTD) the chain is Cytoplasmic. Residues 551–571 (VAMTILPIFVVPIMAFGGFFI) traverse the membrane as a helical segment. At 572-644 (TFDAIPSYFK…DFSASHKIFD (73 aa)) the chain is on the extracellular side. The chain crosses the membrane as a helical span at residues 645–665 (ISILFGMFIGIRIIAYVALLI). Residues 666 to 671 (RSYNNT) are Cytoplasmic-facing.

It belongs to the ABC transporter superfamily. ABCG family. Eye pigment precursor importer (TC 3.A.1.204) subfamily. As to expression, expressed in the intestine in both larvae and adults. Expressed in the gut of males.

The protein localises to the membrane. In terms of biological role, required for efficient RNA interference (RNAi). Plays a role in germline development. This chain is ABC transporter ATP-binding protein/permease wht-1, found in Caenorhabditis elegans.